Consider the following 704-residue polypeptide: Matrix metalloproteinase-9 (704 aa).

The signal sequence occupies residues 1 to 19; sequence MSPRQPLVLVFLVLGCCSA. Positions 20–106 are cleaved as a propeptide — activation peptide; sequence APRPHKPTVV…PRCGVPDLGK (87 aa). The N-linked (GlcNAc...) asparagine glycan is linked to asparagine 38. Positions 97-104 match the Cysteine switch motif; it reads PRCGVPDL. Cysteine 99 serves as a coordination point for Zn(2+). An N-linked (GlcNAc...) asparagine glycan is attached at asparagine 127. Ca(2+)-binding residues include aspartate 131 and aspartate 165. The Zn(2+) site is built by histidine 175 and aspartate 177. Ca(2+)-binding residues include aspartate 182, glycine 183, asparagine 185, and leucine 187. Histidine 190 provides a ligand contact to Zn(2+). The Ca(2+) site is built by glycine 197, glutamine 199, and aspartate 201. Residue histidine 203 participates in Zn(2+) binding. 3 residues coordinate Ca(2+): aspartate 205, aspartate 206, and glutamate 208. Fibronectin type-II domains are found at residues 225-273, 283-331, and 342-390; these read ADGA…FCPS, GDGK…FCPT, and SAGE…FCPD. 6 disulfides stabilise this stretch: cysteine 230–cysteine 256, cysteine 244–cysteine 271, cysteine 288–cysteine 314, cysteine 302–cysteine 329, cysteine 347–cysteine 373, and cysteine 361–cysteine 388. Histidine 401 is a Zn(2+) binding site. Glutamate 402 is an active-site residue. Histidine 405 and histidine 411 together coordinate Zn(2+). Residues 434-507 form a disordered region; it reads DDVRGIQHLY…PSEAPTVPVD (74 aa). 2 stretches are compositionally biased toward pro residues: residues 450 to 461 and 483 to 496; these read EPQPPTAPPTAP and TGPP…PPTA. Residues cysteine 513 and cysteine 701 are joined by a disulfide bond. 4 Hemopexin repeats span residues 515–560, 561–605, 607–654, and 655–701; these read VNIF…WPAL, PRKL…GLGP, VTQV…YPGV, and PLNT…ILQC.

The protein belongs to the peptidase M10A family. In terms of assembly, exists as monomer or homodimer; disulfide-linked. Also exists as heterodimer with LCN2. Macrophages and transformed cell lines produce only the monomeric form. Interacts with ECM1. Requires Zn(2+) as cofactor. Ca(2+) serves as cofactor. In terms of processing, N- and O-glycosylated.

The protein localises to the secreted. It is found in the extracellular space. It localises to the extracellular matrix. The enzyme catalyses Cleavage of gelatin types I and V and collagen types IV and V.. In terms of biological role, matrix metalloproteinase that plays an essential role in local proteolysis of the extracellular matrix and in leukocyte migration. Could play a role in bone osteoclastic resorption. Cleaves KiSS1 at a Gly-|-Leu bond. Cleaves NINJ1 to generate the Secreted ninjurin-1 form. Cleaves type IV and type V collagen into large C-terminal three quarter fragments and shorter N-terminal one quarter fragments. Degrades fibronectin but not laminin or Pz-peptide. The chain is Matrix metalloproteinase-9 (MMP9) from Canis lupus familiaris (Dog).